Consider the following 216-residue polypeptide: Probable succinyl-CoA:3-ketoacid coenzyme A transferase subunit B (216 aa).

Residue glutamate 47 is part of the active site.

The protein belongs to the 3-oxoacid CoA-transferase subunit B family. In terms of assembly, heterodimer of a subunit A and a subunit B.

The enzyme catalyses a 3-oxo acid + succinyl-CoA = a 3-oxoacyl-CoA + succinate. This is Probable succinyl-CoA:3-ketoacid coenzyme A transferase subunit B (scoB) from Bacillus subtilis (strain 168).